Reading from the N-terminus, the 760-residue chain is Endoplasmin homolog (760 aa).

The signal sequence occupies residues Met1 to Ala23. The ATP site is built by Asn95, Asp137, Asn150, and Phe187. Asn95 carries an N-linked (GlcNAc...) asparagine glycan. An N-linked (GlcNAc...) asparagine glycan is attached at Asn423. The interval Ser727 to Leu760 is disordered. Over residues Ala741 to Leu760 the composition is skewed to acidic residues. The short motif at His757–Leu760 is the Prevents secretion from ER element.

This sequence belongs to the heat shock protein 90 family.

It is found in the endoplasmic reticulum lumen. Molecular chaperone that functions in the processing and transport of secreted proteins. The chain is Endoplasmin homolog from Caenorhabditis elegans.